A 223-amino-acid polypeptide reads, in one-letter code: 3,4-dihydroxy-2-butanone 4-phosphate synthase (223 aa).

D-ribulose 5-phosphate-binding positions include 47–48 (RE), D52, 160–164 (RRGHT), and E184. A Mg(2+)-binding site is contributed by E48. A Mg(2+)-binding site is contributed by H163.

The protein belongs to the DHBP synthase family. In terms of assembly, homodimer. Mg(2+) is required as a cofactor. Requires Mn(2+) as cofactor.

The catalysed reaction is D-ribulose 5-phosphate = (2S)-2-hydroxy-3-oxobutyl phosphate + formate + H(+). The protein operates within cofactor biosynthesis; riboflavin biosynthesis; 2-hydroxy-3-oxobutyl phosphate from D-ribulose 5-phosphate: step 1/1. Catalyzes the conversion of D-ribulose 5-phosphate to formate and 3,4-dihydroxy-2-butanone 4-phosphate. This Cupriavidus pinatubonensis (strain JMP 134 / LMG 1197) (Cupriavidus necator (strain JMP 134)) protein is 3,4-dihydroxy-2-butanone 4-phosphate synthase.